A 486-amino-acid polypeptide reads, in one-letter code: MTKTDVQMLKNYIGGQWIEAETSQTEAVYNPATGKIIAEVPLSTKKDVERAVQAAQEAFTTWSKTPVPRRARILFKYQQLLVDKWDELAELVTMENGKSITEAKGEVQRGIECVEFAAGAPTLMMGKQLPDIASGLESGMYRYPIGVIGGITPFNFPMMVPCWMFPLAIACGNTFVLKPSERTPILAARLAELFEEAGLPKGVLNIVNGAHDVVNGLLEHQKVKAISFVGSQPVAEYVYKKGTEHGKRVQALAGAKNHSIVLKDADLDAATKQIIGAAFGSAGERCMAAAVVAVEEEVADDLIQKLVDESNELVIGNGINEEVFLGPVIREEHKERTLQYIQSGIEEGASLIRDGRKDHETNGKGYFVGPTIFDHVTNQMKIWQDEIFAPVLSIVRVSSLAEAIDLSNQSKFANGACLYTDSASSIREFRENIEAGMLGVNIGVPAPMAFFPFSGWKDSFYGDLHANGTDGVEFYTRKKMVTARYM.

F154, K178, E181, R182, and S231 together coordinate NAD(+). C286 functions as the Nucleophile in the catalytic mechanism. NAD(+) is bound at residue E386.

This sequence belongs to the aldehyde dehydrogenase family. IolA subfamily. In terms of assembly, homotetramer.

It carries out the reaction 3-oxopropanoate + NAD(+) + CoA + H2O = hydrogencarbonate + acetyl-CoA + NADH + H(+). It catalyses the reaction 2-methyl-3-oxopropanoate + NAD(+) + CoA + H2O = propanoyl-CoA + hydrogencarbonate + NADH + H(+). The protein operates within polyol metabolism; myo-inositol degradation into acetyl-CoA; acetyl-CoA from myo-inositol: step 7/7. Its function is as follows. Catalyzes the oxidation of malonate semialdehyde (MSA) and methylmalonate semialdehyde (MMSA) into acetyl-CoA and propanoyl-CoA, respectively. Is involved in a myo-inositol catabolic pathway. Bicarbonate, and not CO2, is the end-product of the enzymatic reaction. The sequence is that of Malonate-semialdehyde dehydrogenase from Bacillus pumilus (strain SAFR-032).